The sequence spans 320 residues: MPDPMRSYLDFEKPVAELDSKVDELRAMAASGTDIGEEVSRIEEKAGQALADLYANLTPWQKTMVARHPQRPHFTDFVNALITEFTPLAGDRKFGEDAALLGGFGRFRGEPICVMGQEKGATTESRLKHNFGMARPEGYRKAVRLMEMAERFGLPVLSLVDSAGAYPGIGAEERGQAEAIARSTDACLALGVPNVAIITGEGMSGGAIALTTANKVLMLEHAIYSVISPEAASSILWRDGTKAQEAANSMKITAQDMLRFGVVDTILKEPVGGAHRDPAAMIAATGDAIAQAFDELKGLDAAAIRKQRRQKFIEIGRKLS.

The CoA carboxyltransferase C-terminal domain occupies 41–295 (RIEEKAGQAL…GDAIAQAFDE (255 aa)).

It belongs to the AccA family. As to quaternary structure, acetyl-CoA carboxylase is a heterohexamer composed of biotin carboxyl carrier protein (AccB), biotin carboxylase (AccC) and two subunits each of ACCase subunit alpha (AccA) and ACCase subunit beta (AccD).

It localises to the cytoplasm. It catalyses the reaction N(6)-carboxybiotinyl-L-lysyl-[protein] + acetyl-CoA = N(6)-biotinyl-L-lysyl-[protein] + malonyl-CoA. It functions in the pathway lipid metabolism; malonyl-CoA biosynthesis; malonyl-CoA from acetyl-CoA: step 1/1. Its function is as follows. Component of the acetyl coenzyme A carboxylase (ACC) complex. First, biotin carboxylase catalyzes the carboxylation of biotin on its carrier protein (BCCP) and then the CO(2) group is transferred by the carboxyltransferase to acetyl-CoA to form malonyl-CoA. This is Acetyl-coenzyme A carboxylase carboxyl transferase subunit alpha from Bradyrhizobium sp. (strain ORS 278).